Reading from the N-terminus, the 189-residue chain is Putative zinc finger protein ORF189 (189 aa).

The C2H2-type zinc-finger motif lies at 114-137; sequence YVCPYCVSRFPTVRALKIHLKRRH.

The protein is Putative zinc finger protein ORF189 of Acidianus two-tailed virus (ATV).